The following is a 252-amino-acid chain: Imidazole glycerol phosphate synthase subunit HisF (252 aa).

Active-site residues include aspartate 11 and aspartate 130.

The protein belongs to the HisA/HisF family. Heterodimer of HisH and HisF.

It localises to the cytoplasm. It catalyses the reaction 5-[(5-phospho-1-deoxy-D-ribulos-1-ylimino)methylamino]-1-(5-phospho-beta-D-ribosyl)imidazole-4-carboxamide + L-glutamine = D-erythro-1-(imidazol-4-yl)glycerol 3-phosphate + 5-amino-1-(5-phospho-beta-D-ribosyl)imidazole-4-carboxamide + L-glutamate + H(+). It participates in amino-acid biosynthesis; L-histidine biosynthesis; L-histidine from 5-phospho-alpha-D-ribose 1-diphosphate: step 5/9. Functionally, IGPS catalyzes the conversion of PRFAR and glutamine to IGP, AICAR and glutamate. The HisF subunit catalyzes the cyclization activity that produces IGP and AICAR from PRFAR using the ammonia provided by the HisH subunit. This is Imidazole glycerol phosphate synthase subunit HisF from Bacillus cereus (strain ATCC 10987 / NRS 248).